A 203-amino-acid chain; its full sequence is V-type ATP synthase subunit D (203 aa).

This sequence belongs to the V-ATPase D subunit family.

Functionally, produces ATP from ADP in the presence of a proton gradient across the membrane. This is V-type ATP synthase subunit D from Chlamydia trachomatis serovar L2 (strain ATCC VR-902B / DSM 19102 / 434/Bu).